The sequence spans 60 residues: UPF0434 protein PM0859 (60 aa).

It belongs to the UPF0434 family.

The protein is UPF0434 protein PM0859 of Pasteurella multocida (strain Pm70).